The chain runs to 594 residues: Serine/threonine-protein kinase UL13 homolog (594 aa).

2 disordered regions span residues 1 to 105 (MARS…TSQC) and 128 to 183 (ECDA…VGGR). Residues 38-47 (RPKKSTRGRS) show a composition bias toward basic residues. The Protein kinase domain maps to 223 to 594 (GEIPKFGGAG…SIPLLWTPRP (372 aa)). ATP contacts are provided by residues 229-237 (GGAGSYGEV) and Lys-248. Asp-349 functions as the Proton acceptor in the catalytic mechanism.

The protein belongs to the protein kinase superfamily. Ser/Thr protein kinase family. In terms of processing, autophosphorylated.

It is found in the virion tegument. The protein resides in the host nucleus. It catalyses the reaction L-seryl-[protein] + ATP = O-phospho-L-seryl-[protein] + ADP + H(+). It carries out the reaction L-threonyl-[protein] + ATP = O-phospho-L-threonyl-[protein] + ADP + H(+). Its function is as follows. Multifunctional serine/threonine kinase that plays a role in several processes including egress of virus particles from the nucleus, modulation of the actin cytoskeleton and regulation of viral and cellular gene expression. Regulates the nuclear localization of viral envelopment factors UL34 and UL31 homologs, by phosphorylating the US3 kinase homolog, indicating a role in nuclear egress. Disrupts host nuclear lamins, including LMNA and LMNB1. Phosphorylates the viral Fc receptor composed of glycoproteins E (gE) and I (gI). Phosphorylation of glycoprotein E (gE) by UL13 homolog alters its subcellular localization, from the host early endosome to the plasma membrane. Participates in the transcriptional regulation of cellular and viral mRNAs mainly by phosphorylating the viral transcriptional regulator ICP22 homolog. The chain is Serine/threonine-protein kinase UL13 homolog from Equus caballus (Horse).